A 177-amino-acid polypeptide reads, in one-letter code: ATP-dependent protease subunit HslV (177 aa).

Thr2 is an active-site residue. 3 residues coordinate Na(+): Gly157, Cys160, and Thr163.

This sequence belongs to the peptidase T1B family. HslV subfamily. As to quaternary structure, a double ring-shaped homohexamer of HslV is capped on each side by a ring-shaped HslU homohexamer. The assembly of the HslU/HslV complex is dependent on binding of ATP.

The protein resides in the cytoplasm. It catalyses the reaction ATP-dependent cleavage of peptide bonds with broad specificity.. Its activity is regulated as follows. Allosterically activated by HslU binding. Functionally, protease subunit of a proteasome-like degradation complex believed to be a general protein degrading machinery. The protein is ATP-dependent protease subunit HslV of Aeromonas hydrophila subsp. hydrophila (strain ATCC 7966 / DSM 30187 / BCRC 13018 / CCUG 14551 / JCM 1027 / KCTC 2358 / NCIMB 9240 / NCTC 8049).